We begin with the raw amino-acid sequence, 235 residues long: LexA repressor (235 aa).

The segment at residues 26–46 is a DNA-binding region (H-T-H motif); that stretch reads FDEMKDALDLKSKSGIHRLIT. Residues Ser-156 and Lys-194 each act as for autocatalytic cleavage activity in the active site.

The protein belongs to the peptidase S24 family. In terms of assembly, homodimer.

The catalysed reaction is Hydrolysis of Ala-|-Gly bond in repressor LexA.. Represses a number of genes involved in the response to DNA damage (SOS response), including recA and lexA. In the presence of single-stranded DNA, RecA interacts with LexA causing an autocatalytic cleavage which disrupts the DNA-binding part of LexA, leading to derepression of the SOS regulon and eventually DNA repair. The sequence is that of LexA repressor from Paramagnetospirillum magneticum (strain ATCC 700264 / AMB-1) (Magnetospirillum magneticum).